The sequence spans 861 residues: DNA mismatch repair protein MutS (861 aa).

617–624 is an ATP binding site; that stretch reads GPNMGGKS. Positions 799-822 are disordered; it reads ETTSLPHEQPPAAKAKDAPQVPHQ. Over residues 808-820 the composition is skewed to low complexity; the sequence is PPAAKAKDAPQVP.

Belongs to the DNA mismatch repair MutS family.

Functionally, this protein is involved in the repair of mismatches in DNA. It is possible that it carries out the mismatch recognition step. This protein has a weak ATPase activity. In Pseudomonas putida (strain GB-1), this protein is DNA mismatch repair protein MutS.